The chain runs to 688 residues: Lipase (688 aa).

Positions 1-35 (MKTRQNKYSIRKFSVGASSILIAALLFMGGGSAQA) are cleaved as a signal peptide. Residues 31-309 (GSAQAAEQQQ…KSAKQKQYKN (279 aa)) form a disordered region. Residues 36 to 302 (AEQQQDKGTV…KNEDQTNKSA (267 aa)) constitute a propeptide, removed in mature form. Over residues 45–54 (VENSTTQSIG) the composition is skewed to polar residues. 2 stretches are compositionally biased toward basic and acidic residues: residues 84–95 (ESLHNETPKNED) and 103–143 (SQND…KHAS). Composition is skewed to polar residues over residues 144 to 175 (ENNQ…AQQE) and 184 to 211 (KQDT…QSTE). A compositionally biased stretch (basic and acidic residues) spans 227–268 (KNDDDKVETFNLNSKEEPLKVDKQANPTTDKDKSSKNDKGSH). Over residues 274-289 (LESNAVATTNKQSKQQ) the composition is skewed to polar residues. Serine 418 serves as the catalytic Nucleophile. Aspartate 609 serves as the catalytic Charge relay system. Residue aspartate 647 coordinates Ca(2+). Residue histidine 648 is the Charge relay system of the active site. The Ca(2+) site is built by aspartate 650, aspartate 655, and aspartate 658.

The protein belongs to the AB hydrolase superfamily. Lipase family.

The protein resides in the secreted. It carries out the reaction a triacylglycerol + H2O = a diacylglycerol + a fatty acid + H(+). The chain is Lipase (lip) from Staphylococcus epidermidis (strain ATCC 35984 / DSM 28319 / BCRC 17069 / CCUG 31568 / BM 3577 / RP62A).